Here is a 480-residue protein sequence, read N- to C-terminus: Glutamyl-tRNA(Gln) amidotransferase subunit A (480 aa).

Active-site charge relay system residues include Lys74 and Ser149. Ser173 functions as the Acyl-ester intermediate in the catalytic mechanism.

It belongs to the amidase family. GatA subfamily. As to quaternary structure, heterotrimer of A, B and C subunits.

It catalyses the reaction L-glutamyl-tRNA(Gln) + L-glutamine + ATP + H2O = L-glutaminyl-tRNA(Gln) + L-glutamate + ADP + phosphate + H(+). Allows the formation of correctly charged Gln-tRNA(Gln) through the transamidation of misacylated Glu-tRNA(Gln) in organisms which lack glutaminyl-tRNA synthetase. The reaction takes place in the presence of glutamine and ATP through an activated gamma-phospho-Glu-tRNA(Gln). The chain is Glutamyl-tRNA(Gln) amidotransferase subunit A from Prochlorococcus marinus (strain MIT 9312).